The chain runs to 400 residues: Vitamin K-dependent protein Z (400 aa).

Positions 1-23 (MAGCVPLLQGLVLVLALHRVEPS) are cleaved as a signal peptide. Residues 24–40 (VFLPASKANDVLVRWKR) constitute a propeptide that is removed on maturation. Residues 41 to 86 (AGSYLLEELFEGNLEKECYEEICVYEEAREVFENEVVTDEFWRRYK) enclose the Gla domain. Residues glutamate 47, glutamate 48, glutamate 51, glutamate 55, glutamate 57, glutamate 60, glutamate 61, glutamate 66, glutamate 67, glutamate 70, glutamate 73, glutamate 75, and glutamate 80 each carry the 4-carboxyglutamate modification. Cysteine 58 and cysteine 63 are oxidised to a cystine. EGF-like domains are found at residues 87 to 123 (GGSPCISQPCLHNGSCQDSIWGYTCTCSPGYEGSNCE) and 125 to 166 (AKNE…KQCV). 7 cysteine pairs are disulfide-bonded: cysteine 91–cysteine 102, cysteine 96–cysteine 111, cysteine 113–cysteine 122, cysteine 129–cysteine 141, cysteine 137–cysteine 150, cysteine 152–cysteine 165, and cysteine 203–cysteine 219. Residue serine 93 is glycosylated (O-linked (Glc...) serine). A glycan (N-linked (GlcNAc...) asparagine) is linked at asparagine 99. At aspartate 104 the chain carries (3R)-3-hydroxyaspartate. In terms of domain architecture, Peptidase S1 spans 175–400 (VLTSEKRAPD…YSLWFKQIMN (226 aa)). 4 N-linked (GlcNAc...) asparagine glycosylation sites follow: asparagine 225, asparagine 233, asparagine 306, and asparagine 332. Cysteine 327 and cysteine 341 are joined by a disulfide.

The protein belongs to the peptidase S1 family. In terms of assembly, interacts with SERPINA10. The iron and 2-oxoglutarate dependent 3-hydroxylation of aspartate and asparagine is (R) stereospecific within EGF domains. In terms of tissue distribution, plasma.

It localises to the secreted. Appears to assist hemostasis by binding thrombin and promoting its association with phospholipid vesicles. Inhibits activity of the coagulation protease factor Xa in the presence of SERPINA10, calcium and phospholipids. The protein is Vitamin K-dependent protein Z (PROZ) of Homo sapiens (Human).